A 364-amino-acid chain; its full sequence is Probable dual-specificity RNA methyltransferase RlmN (364 aa).

The active-site Proton acceptor is glutamate 106. A Radical SAM core domain is found at 112–350; the sequence is YPRRNTVCIS…SCTVRDTRGR (239 aa). Cysteine 119 and cysteine 356 form a disulfide bridge. Cysteine 126, cysteine 130, and cysteine 133 together coordinate [4Fe-4S] cluster. Residues 177-178, serine 211, 234-236, and asparagine 313 each bind S-adenosyl-L-methionine; these read GE and SLH. The active-site S-methylcysteine intermediate is the cysteine 356.

This sequence belongs to the radical SAM superfamily. RlmN family. [4Fe-4S] cluster is required as a cofactor.

Its subcellular location is the cytoplasm. It catalyses the reaction adenosine(2503) in 23S rRNA + 2 reduced [2Fe-2S]-[ferredoxin] + 2 S-adenosyl-L-methionine = 2-methyladenosine(2503) in 23S rRNA + 5'-deoxyadenosine + L-methionine + 2 oxidized [2Fe-2S]-[ferredoxin] + S-adenosyl-L-homocysteine. The catalysed reaction is adenosine(37) in tRNA + 2 reduced [2Fe-2S]-[ferredoxin] + 2 S-adenosyl-L-methionine = 2-methyladenosine(37) in tRNA + 5'-deoxyadenosine + L-methionine + 2 oxidized [2Fe-2S]-[ferredoxin] + S-adenosyl-L-homocysteine. Its function is as follows. Specifically methylates position 2 of adenine 2503 in 23S rRNA and position 2 of adenine 37 in tRNAs. The polypeptide is Probable dual-specificity RNA methyltransferase RlmN (Mycobacterium bovis (strain ATCC BAA-935 / AF2122/97)).